Here is a 460-residue protein sequence, read N- to C-terminus: Elongation factor 1-alpha-A (460 aa).

Glycine 2 carries the n,N,N-trimethylglycine modification. The residue at position 3 (lysine 3) is an N6,N6-dimethyllysine; alternate. The residue at position 3 (lysine 3) is an N6-methyllysine; alternate. The 236-residue stretch at 5–240 folds into the tr-type G domain; sequence KGHINVVVIG…DSIEPPARPT (236 aa). A G1 region spans residues 14 to 21; it reads GHVDSGKS. Position 14–21 (14–21) interacts with GTP; it reads GHVDSGKS. Lysine 30 is subject to N6-methyllysine. The G2 stretch occupies residues 70–74; it reads GITID. At lysine 79 the chain carries N6,N6,N6-trimethyllysine. The tract at residues 91–94 is G3; that stretch reads DAPG. Residues 91-95 and 153-156 each bind GTP; these read DAPGH and NKMD. The segment at 153–156 is G4; that stretch reads NKMD. Residues 192 to 194 are G5; it reads SGF. Residue lysine 316 is modified to N6,N6-dimethyllysine; alternate. Lysine 316 is modified (N6-methyllysine; alternate). Lysine 390 carries the N6-methyllysine modification.

The protein belongs to the TRAFAC class translation factor GTPase superfamily. Classic translation factor GTPase family. EF-Tu/EF-1A subfamily.

It localises to the cytoplasm. Its function is as follows. This protein promotes the GTP-dependent binding of aminoacyl-tRNA to the A-site of ribosomes during protein biosynthesis. The protein is Elongation factor 1-alpha-A (tef101) of Schizosaccharomyces pombe (strain 972 / ATCC 24843) (Fission yeast).